The following is a 620-amino-acid chain: Ion-translocating oxidoreductase complex subunit C (620 aa).

4Fe-4S ferredoxin-type domains follow at residues threonine 366–tyrosine 397 and lysine 407–tyrosine 436. [4Fe-4S] cluster-binding residues include cysteine 377, cysteine 380, cysteine 383, cysteine 387, cysteine 416, cysteine 419, cysteine 422, and cysteine 426.

Belongs to the 4Fe4S bacterial-type ferredoxin family. RnfC subfamily. As to quaternary structure, the complex is composed of six subunits: RnfA, RnfB, RnfC, RnfD, RnfE and RnfG. [4Fe-4S] cluster is required as a cofactor.

Its subcellular location is the cell inner membrane. Part of a membrane-bound complex that couples electron transfer with translocation of ions across the membrane. The sequence is that of Ion-translocating oxidoreductase complex subunit C from Yersinia pestis bv. Antiqua (strain Antiqua).